The primary structure comprises 390 residues: GPI inositol-deacylase (390 aa).

A helical transmembrane segment spans residues 21–41 (FIVYFIICLTIIISALGVYLY). Residue S202 is part of the active site. A helical transmembrane segment spans residues 354–374 (VHLLSLTIFALKWTIIVLAII).

Belongs to the GPI inositol-deacylase family.

It localises to the endoplasmic reticulum membrane. Its function is as follows. Involved in inositol deacylation of GPI-anchored proteins which plays important roles in the quality control and ER-associated degradation of GPI-anchored proteins. The sequence is that of GPI inositol-deacylase (BST1) from Candida albicans (strain SC5314 / ATCC MYA-2876) (Yeast).